Reading from the N-terminus, the 183-residue chain is Inosine/xanthosine triphosphatase (183 aa).

It belongs to the YjjX NTPase family. Homodimer. Mg(2+) is required as a cofactor. Mn(2+) serves as cofactor.

The enzyme catalyses XTP + H2O = XDP + phosphate + H(+). It catalyses the reaction ITP + H2O = IDP + phosphate + H(+). Its function is as follows. Phosphatase that hydrolyzes non-canonical purine nucleotides such as XTP and ITP to their respective diphosphate derivatives. Probably excludes non-canonical purines from DNA/RNA precursor pool, thus preventing their incorporation into DNA/RNA and avoiding chromosomal lesions. The chain is Inosine/xanthosine triphosphatase from Vibrio cholerae serotype O1 (strain ATCC 39315 / El Tor Inaba N16961).